A 356-amino-acid chain; its full sequence is 5-formaminoimidazole-4-carboxamide-1-(beta)-D-ribofuranosyl 5'-monophosphate synthetase (356 aa).

Residues histidine 27 and serine 94 each contribute to the 5-amino-1-(5-phospho-beta-D-ribosyl)imidazole-4-carboxamide site. The ATP-grasp domain occupies 101-333; that stretch reads TENFAELTVP…YADLIQEDLS (233 aa). ATP contacts are provided by residues 145 to 196 and glutamate 226; that span reads PRDI…TRYY. Asparagine 255 contacts 5-amino-1-(5-phospho-beta-D-ribosyl)imidazole-4-carboxamide. Glutamate 293 and glutamate 306 together coordinate Mg(2+).

Belongs to the phosphohexose mutase family. Mg(2+) is required as a cofactor. The cofactor is Mn(2+).

The catalysed reaction is 5-amino-1-(5-phospho-beta-D-ribosyl)imidazole-4-carboxamide + formate + ATP = 5-formamido-1-(5-phospho-D-ribosyl)imidazole-4-carboxamide + ADP + phosphate. The protein operates within purine metabolism; IMP biosynthesis via de novo pathway; 5-formamido-1-(5-phospho-D-ribosyl)imidazole-4-carboxamide from 5-amino-1-(5-phospho-D-ribosyl)imidazole-4-carboxamide (formate route): step 1/1. Its function is as follows. Catalyzes the ATP- and formate-dependent formylation of 5-aminoimidazole-4-carboxamide-1-beta-d-ribofuranosyl 5'-monophosphate (AICAR) to 5-formaminoimidazole-4-carboxamide-1-beta-d-ribofuranosyl 5'-monophosphate (FAICAR) in the absence of folates. In Methanosarcina acetivorans (strain ATCC 35395 / DSM 2834 / JCM 12185 / C2A), this protein is 5-formaminoimidazole-4-carboxamide-1-(beta)-D-ribofuranosyl 5'-monophosphate synthetase.